The chain runs to 442 residues: MSHEGEEDLLEYSDNEQEIQVDATNINESAVDATVSETAEGATTDSEKKGSYVGIHSTGFKDFLLKPELARAIIDCGFEHPSEVQQHTIPQSIHGTDVLCQAKSGLGKTAVFVLSTLQQLDPVPGEVSVVVICNARELAYQIRNEYLRFSKYMPDVKTAVFYGGTPITKDAELLKNKETAPHIVVATPGRLKALVRDKLIDLSHVKNFVIDECDKVLEELDMRRDVQDIFRATPRDKQVMMFSATLSEEIRPICRRFLQNPLEIFVDDEAKLTLHGLQQYYIKLQENEKNRKLAQLLDDLEFNQVIIFVKSTKRANELTKLLNESNFPAITVHGNMKQAERIARYKAFKEFEKRICVSTDVFGRGIDIERINLAINYDLTTEADQYLHRVGRAGRFGTKGLAISFVSSPEDEEVLGKIQERFDVKIAEFPEEGIDPSTYLNN.

The short motif at 58 to 86 (TGFKDFLLKPELARAIIDCGFEHPSEVQQ) is the Q motif element. One can recognise a Helicase ATP-binding domain in the interval 89–264 (IPQSIHGTDV…RRFLQNPLEI (176 aa)). 102 to 109 (AKSGLGKT) lines the ATP pocket. The DECD box signature appears at 211–214 (DECD). In terms of domain architecture, Helicase C-terminal spans 292–437 (KLAQLLDDLE…EFPEEGIDPS (146 aa)).

Belongs to the DEAD box helicase family. DECD subfamily.

The protein resides in the nucleus. The enzyme catalyses ATP + H2O = ADP + phosphate + H(+). Functionally, ATP-binding RNA helicase involved in transcription elongation and required for the export of mRNA out of the nucleus. SUB2 also plays a role in pre-mRNA splicing and spliceosome assembly. May be involved in rDNA and telomeric silencing, and maintenance of genome integrity. This Vanderwaltozyma polyspora (strain ATCC 22028 / DSM 70294 / BCRC 21397 / CBS 2163 / NBRC 10782 / NRRL Y-8283 / UCD 57-17) (Kluyveromyces polysporus) protein is ATP-dependent RNA helicase SUB2-2 (SUB2-2).